Here is a 422-residue protein sequence, read N- to C-terminus: 4-hydroxy-3-methylbut-2-en-1-yl diphosphate synthase (flavodoxin) (422 aa).

Cys-316, Cys-319, Cys-362, and Glu-369 together coordinate [4Fe-4S] cluster.

It belongs to the IspG family. It depends on [4Fe-4S] cluster as a cofactor.

It catalyses the reaction (2E)-4-hydroxy-3-methylbut-2-enyl diphosphate + oxidized [flavodoxin] + H2O + 2 H(+) = 2-C-methyl-D-erythritol 2,4-cyclic diphosphate + reduced [flavodoxin]. Its pathway is isoprenoid biosynthesis; isopentenyl diphosphate biosynthesis via DXP pathway; isopentenyl diphosphate from 1-deoxy-D-xylulose 5-phosphate: step 5/6. In terms of biological role, converts 2C-methyl-D-erythritol 2,4-cyclodiphosphate (ME-2,4cPP) into 1-hydroxy-2-methyl-2-(E)-butenyl 4-diphosphate. This is 4-hydroxy-3-methylbut-2-en-1-yl diphosphate synthase (flavodoxin) from Ehrlichia ruminantium (strain Gardel).